The primary structure comprises 1255 residues: MEAITFTARKHPFPNEVSVDFGLQLVGSLPVHSLTTMPMLPWVVAEVRRLSGQCSKKEPRTKQVRLWVSPSGLRCEPDLEKSQPWDPLICSSIFECKPQRVHKLIHNSHDPSYFACLIKEDAAHRQSLCYVFKADDQTKVPEIISSIRQAGKIARQEELRCPSEFDDTFAKKFEVLFCGRVTVAHKKAPPALIDECIEKFNHVSCGRRTDWEAPTGQPSAPGPRPMRKSFSQPGLRSLAFRKEFQDASLRSSTFSSFDNDIENHLIGGHNVVQPTDMEENRTMLFTIGQSEVYLISPDTKKIALEKNFKEISFCSQGIRHVDHFGFICRECSGGGSGGFHFVCYVFQCTNEALVDEIMMTLKQAFTVAAVQQTAKAPAQLCEGCPLQGLHKLCERIEGMNSSKTKLELQKHLTTLTNQEQATIFEEVQKLRPRNEQRENELIISFLRCLYEEKQKEHSHTGEPKQTLQVAAENIGSDLPPSASRFRLDSLKNRAKRSLTESLESILSRGNKARGLQDHSASVDLDSSTSSTLSNTSKELSMGDKEAFPVSETSFKLLGSSDDLSSDSEGHIAEESALLSPQQAFRRRANTLSHFPVECPAPPEPAQSSPGVSQRKLMRYHSVSTETPHERNVDHLPGGESQGCPGQPSAPPPPRLNPSASSPNFFKYLKHNSSGEQSGNAVPKSVSYRNALRKKLHSSSSVPNFLKFLAPVDENNTCDFKNTNRDFESKANHLGDTDGTPVKTRRHSWRQQIFLRVATPQKACDSPSRYEDYSELGELPPRSPLEPVCEDGPFGPVQEEKRKTSRELRELWKKAILQQILLLRMEKENQKLQASENDLLNKRLKLDYEEITPCLKEVTTVWEKMLSTPGRSKIKFDMEKVHSAVGQGVPRHHRGEIWKFLAEQFHLKHPFPSKQQPKDVPYKELLKKLTSQQHAILIDLGRTFPTHPYFSAQLGAGQLSLYNILKAYSLLDQEVGYCQGLSFVAGILLLHMSEEEAFKMLKFLMFDMGLRKQYRPDMIILQIQMYQLSRLLHDYHRDLYNHLEEHEIGPSLYAAPWFLTVFASQFPLGFVARVFDMIFLQGSEVIFKVALSLLGSHKPLILQHENLETIVDFIKNTLPNLGLVQMEKTISQVFEMDIAKQLQAYEVEYHVLQEELIESSPLSDNQRMEKLEKTNSSLRKQNLDLLEQLQVANARIQSLEATVEKLLTSESKLKQAALTLEVERSALLQMVEELRRQSARPSTPEPDCTQLEPTGD.

A Phosphoserine modification is found at Ser-146. The segment at 208–228 (RTDWEAPTGQPSAPGPRPMRK) is disordered. Ser-229 is modified (phosphoserine; by PKB/AKT1). Ser-231 is subject to Phosphoserine; by AMPK. Residues 238 to 398 (LAFRKEFQDA…LHKLCERIEG (161 aa)) form the PID domain. Ser-489 is subject to Phosphoserine; by PKB/AKT1. A Phosphoserine modification is found at Ser-497. A Phosphothreonine; by PKB/AKT1 modification is found at Thr-499. Phosphoserine is present on residues Ser-501, Ser-519, Ser-521, Ser-559, Ser-560, Ser-564, Ser-565, and Ser-579. Disordered regions lie at residues 509 to 544 (GNKA…MGDK) and 559 to 581 (SSDD…LSPQ). A compositionally biased stretch (low complexity) spans 519–539 (SASVDLDSSTSSTLSNTSKEL). Phosphothreonine is present on Thr-590. Disordered regions lie at residues 595–614 (PVEC…VSQR) and 621–681 (SVST…GNAV). At Ser-608 the chain carries Phosphoserine. Position 621 is a phosphoserine; by PKB/AKT1 (Ser-621). Phosphoserine is present on residues Ser-660 and Ser-661. Polar residues predominate over residues 670–679 (HNSSGEQSGN). Ser-697 is modified (phosphoserine; by PKB/AKT1). Ser-698 and Ser-699 each carry phosphoserine. Phosphoserine; by AMPK is present on Ser-700. A disordered region spans residues 764–786 (DSPSRYEDYSELGELPPRSPLEP). Phosphoserine occurs at positions 782 and 1028. In terms of domain architecture, Rab-GAP TBC spans 887 to 1081 (GVPRHHRGEI…RVFDMIFLQG (195 aa)). Tyr-1039 carries the post-translational modification Phosphotyrosine. Thr-1218 bears the Phosphothreonine mark. The disordered stretch occupies residues 1233 to 1255 (LRRQSARPSTPEPDCTQLEPTGD).

As to quaternary structure, interacts with APPL2 (via BAR domain); interaction is dependent of TBC1D1 phosphorylation at Ser-229; interaction diminishes the phosphorylation of TBC1D1 at Thr-590, resulting in inhibition of SLC2A4/GLUT4 translocation and glucose uptake. Post-translationally, insulin-stimulated phosphorylation by AKT family kinases stimulates SLC2A4/GLUT4 translocation. In terms of tissue distribution, expressed in highest levels in hematopoietic cells, testis and kidney.

Its subcellular location is the nucleus. May act as a GTPase-activating protein for Rab family protein(s). May play a role in the cell cycle and differentiation of various tissues. Involved in the trafficking and translocation of GLUT4-containing vesicles and insulin-stimulated glucose uptake into cells. This Mus musculus (Mouse) protein is TBC1 domain family member 1 (Tbc1d1).